A 729-amino-acid polypeptide reads, in one-letter code: Methionine--tRNA ligase (729 aa).

The 'HIGH' region motif lies at 12 to 22; the sequence is PYVNNIPHLGN. Residues cysteine 143, cysteine 146, cysteine 155, and cysteine 158 each coordinate Zn(2+). The short motif at 330 to 334 is the 'KMSKS' region element; the sequence is KFSKS. Lysine 333 lines the ATP pocket. Residues 565–670 form the tRNA-binding domain; it reads FSEQVCLKVV…DNPIPGERII (106 aa).

It belongs to the class-I aminoacyl-tRNA synthetase family. MetG type 1 subfamily. In terms of assembly, homodimer. Requires Zn(2+) as cofactor.

The protein localises to the cytoplasm. It catalyses the reaction tRNA(Met) + L-methionine + ATP = L-methionyl-tRNA(Met) + AMP + diphosphate. Its function is as follows. Is required not only for elongation of protein synthesis but also for the initiation of all mRNA translation through initiator tRNA(fMet) aminoacylation. The sequence is that of Methionine--tRNA ligase from Borrelia hermsii (strain HS1 / DAH).